Consider the following 251-residue polypeptide: UPF0246 protein DSY0297 (251 aa).

It belongs to the UPF0246 family.

The sequence is that of UPF0246 protein DSY0297 from Desulfitobacterium hafniense (strain Y51).